We begin with the raw amino-acid sequence, 183 residues long: uncharacterized protein (183 aa).

The disordered stretch occupies residues 1 to 36; the sequence is MAKRGNKKKQEAPLSLGKHTVGGRVGKPTNAKTGSA. Residues 100–174 form the RRM domain; that stretch reads TNVVIENLAP…FKLSCYIKKN (75 aa).

The protein localises to the nucleus. It is found in the nucleolus. This is an uncharacterized protein from Schizosaccharomyces pombe (strain 972 / ATCC 24843) (Fission yeast).